Consider the following 379-residue polypeptide: Origin of replication complex subunit 2 (379 aa).

Residues 1–25 (MALRGGHAAAAAGVSSGSEDDDEEA) form a disordered region. The span at 8–17 (AAAAAGVSSG) shows a compositional bias: low complexity.

Belongs to the ORC2 family. In terms of assembly, component of the origin recognition complex (ORC) composed of at least ORC1, ORC2, ORC3, ORC4, ORC5 and ORC6. ORC is regulated in a cell-cycle and development dependent manner. It is sequentially assembled at the exit from anaphase of mitosis and disassembled as cells enter S phase.

Its subcellular location is the nucleus. Functionally, essential protein. Component of the origin recognition complex (ORC) that binds origins of replication. DNA-binding is ATP-dependent, however specific DNA sequences that define origins of replication have not been identified so far. ORC is required to assemble the pre-replication complex necessary to initiate DNA replication. This chain is Origin of replication complex subunit 2, found in Oryza sativa subsp. indica (Rice).